Reading from the N-terminus, the 92-residue chain is Small ribosomal subunit protein uS19 (92 aa).

It belongs to the universal ribosomal protein uS19 family.

Its function is as follows. Protein S19 forms a complex with S13 that binds strongly to the 16S ribosomal RNA. This is Small ribosomal subunit protein uS19 from Macrococcus caseolyticus (strain JCSC5402) (Macrococcoides caseolyticum).